A 466-amino-acid polypeptide reads, in one-letter code: Ribulose bisphosphate carboxylase large chain (466 aa).

An N6,N6,N6-trimethyllysine modification is found at Lys5. Substrate contacts are provided by Asn114 and Thr164. Lys166 (proton acceptor) is an active-site residue. Lys168 provides a ligand contact to substrate. The Mg(2+) site is built by Lys192, Asp194, and Glu195. Lys192 is subject to N6-carboxylysine. The active-site Proton acceptor is the His285. Substrate-binding residues include Arg286, His318, and Ser370.

The protein belongs to the RuBisCO large chain family. Type I subfamily. Heterohexadecamer of 8 large chains and 8 small chains; disulfide-linked. The disulfide link is formed within the large subunit homodimers. Requires Mg(2+) as cofactor. The disulfide bond which can form in the large chain dimeric partners within the hexadecamer appears to be associated with oxidative stress and protein turnover.

The protein resides in the plastid. Its subcellular location is the chloroplast. The enzyme catalyses 2 (2R)-3-phosphoglycerate + 2 H(+) = D-ribulose 1,5-bisphosphate + CO2 + H2O. It carries out the reaction D-ribulose 1,5-bisphosphate + O2 = 2-phosphoglycolate + (2R)-3-phosphoglycerate + 2 H(+). RuBisCO catalyzes two reactions: the carboxylation of D-ribulose 1,5-bisphosphate, the primary event in carbon dioxide fixation, as well as the oxidative fragmentation of the pentose substrate in the photorespiration process. Both reactions occur simultaneously and in competition at the same active site. This is Ribulose bisphosphate carboxylase large chain from Adenium obesum (Desert rose).